Reading from the N-terminus, the 172-residue chain is Protein-export protein SecB (172 aa).

The interval 1-22 (MADETSADINNPALQPNGEDTS) is disordered. The span at 7–20 (ADINNPALQPNGED) shows a compositional bias: polar residues.

This sequence belongs to the SecB family. As to quaternary structure, homotetramer, a dimer of dimers. One homotetramer interacts with 1 SecA dimer.

It is found in the cytoplasm. Its function is as follows. One of the proteins required for the normal export of preproteins out of the cell cytoplasm. It is a molecular chaperone that binds to a subset of precursor proteins, maintaining them in a translocation-competent state. It also specifically binds to its receptor SecA. This Sphingopyxis alaskensis (strain DSM 13593 / LMG 18877 / RB2256) (Sphingomonas alaskensis) protein is Protein-export protein SecB.